The primary structure comprises 262 residues: MGKYMRKFRGATGEELAAMEVTQVVGVRTRSRSAAAAGATTTKVKAASAASTRRRKALLPTAVVGTTRRDGGSCYLQLRSRMLFMAPPRPAPAARAPVVAEAAGSGNGAAAHAAAGLSRCSSTASSVDAAAQDRSLACRSDVAEAGSEHVPEGSASDSASGRDRERRETTPSSFLPGEVSDLESDLAGGQKRSRPLPSAATASAQQATRPKIPPAAEIEAFFAAAEEAEAKRFAAKYNFDVVRGVPLDAGRFEWTPVVSSRS.

The segment at 140–212 (SDVAEAGSEH…SAQQATRPKI (73 aa)) is disordered. Positions 160 to 169 (SGRDRERRET) are enriched in basic and acidic residues. Residues 198–208 (SAATASAQQAT) are compositionally biased toward low complexity.

It belongs to the CDI family. ICK/KRP subfamily. As to expression, expressed in roots, stems, leaves and apex.

In terms of biological role, regulates the production of endosperm cells, affecting seed filling and embryo development. Regulates endoreduplication of endosperm cells. May play a role in the exit from the mitotic cell cycle during rice grain formation. Inhibitis leaf elongation rates by decreasing cell number, that is partly compensated by increased cell size. May not affect growth rate or cell size of the primary root. The chain is Cyclin-dependent kinase inhibitor 1 (KRP1) from Oryza sativa subsp. japonica (Rice).